Reading from the N-terminus, the 25-residue chain is Brevinin-2R (25 aa).

A disulfide bridge connects residues Cys-19 and Cys-25.

It belongs to the frog skin active peptide (FSAP) family. Brevinin subfamily. As to expression, expressed by the skin glands.

Its subcellular location is the secreted. Its function is as follows. Cytotoxic to cancer cells, acts via the activation of the lysosomal-mitochondrial death pathway and autophagy-like cell death. Does not show significant hemolytic activity. The sequence is that of Brevinin-2R from Pelophylax ridibundus (Marsh frog).